The following is a 301-amino-acid chain: NAD kinase (301 aa).

Asp73 functions as the Proton acceptor in the catalytic mechanism. NAD(+) contacts are provided by residues 73-74 (DG), 160-161 (NE), Arg188, Asp190, Ala198, 201-206 (TAYNIS), Ala225, and Gln257.

Belongs to the NAD kinase family. The cofactor is a divalent metal cation.

Its subcellular location is the cytoplasm. The enzyme catalyses NAD(+) + ATP = ADP + NADP(+) + H(+). Functionally, involved in the regulation of the intracellular balance of NAD and NADP, and is a key enzyme in the biosynthesis of NADP. Catalyzes specifically the phosphorylation on 2'-hydroxyl of the adenosine moiety of NAD to yield NADP. The sequence is that of NAD kinase from Helicobacter hepaticus (strain ATCC 51449 / 3B1).